Here is a 371-residue protein sequence, read N- to C-terminus: MPSYLRNLVWATLAAGLVSAAPTPSRVSDLTKKSSSTCTFSSAASASASKSSCSTIVLSNIEVPAGKTLDLTDLKDGTKVIFEGTTTFGYKEWSGPLIKISGSDITVEAADGAVINADGSRWWDGEGTNGGKTKPKFFYAHSLDDSTISGLNIKNTPVQAFSIQSDNLIIDGVTIDNSDGDENGGHNTDGFDISESTGVTIRNAVVKNQDDCIAINSGQNIYFTGGTCSGGHGLSIGSVGGRDDNTVKNVTITDSTVTDSANGVRIKTVYDATGSVSDVTFSDITVSGITDYGIVIEQDYENGSPTGTPTSGVPITDLTVKGITGSVESDAVEVYILCGDDACSDWTWSGVDITSGQTSSKCENVPSGASC.

A signal peptide spans 1 to 19 (MPSYLRNLVWATLAAGLVS). The propeptide occupies 20–34 (AAPTPSRVSDLTKKS). Cysteines 38 and 53 form a disulfide. PbH1 repeat units follow at residues 95–117 (GPLI…VINA), 165–195 (SDNL…DISE), 196–217 (STGV…AINS), 218–238 (GQNI…SIGS), 247–268 (VKNV…RIKT), 276–298 (VSDV…VIEQ), and 310–355 (TSGV…DITS). The active-site Proton donor is Asp-210. Cys-212 and Cys-228 are disulfide-bonded. His-232 is a catalytic residue. Asn-249 carries an N-linked (GlcNAc...) asparagine glycan. 2 cysteine pairs are disulfide-bonded: Cys-338–Cys-343 and Cys-362–Cys-371.

It belongs to the glycosyl hydrolase 28 family.

It localises to the secreted. It carries out the reaction (1,4-alpha-D-galacturonosyl)n+m + H2O = (1,4-alpha-D-galacturonosyl)n + (1,4-alpha-D-galacturonosyl)m.. The sequence is that of Polygalacturonase from Penicillium janthinellum (Penicillium vitale).